The primary structure comprises 838 residues: Glycogen phosphorylase, brain form (838 aa).

Residue Ala-2 is modified to N-acetylalanine. Ser-15 bears the Phosphoserine mark. Residues Asp-43, Tyr-197, and Arg-310 each contribute to the AMP site. Tyr-197 is modified (phosphotyrosine). Position 473 is a phosphotyrosine (Tyr-473). Residue Ser-524 is modified to Phosphoserine. Lys-569 contributes to the pyridoxal 5'-phosphate binding site. The segment at 677 to 678 (TG) is pyridoxal 5'-phosphate. Lys-681 carries the post-translational modification N6-(pyridoxal phosphate)lysine.

The protein belongs to the glycogen phosphorylase family. As to quaternary structure, homodimer. Dimers associate into a tetramer to form the enzymatically active phosphorylase A. Requires pyridoxal 5'-phosphate as cofactor. Post-translationally, phosphorylation of Ser-15 converts phosphorylase B (unphosphorylated) to phosphorylase A.

The enzyme catalyses [(1-&gt;4)-alpha-D-glucosyl](n) + phosphate = [(1-&gt;4)-alpha-D-glucosyl](n-1) + alpha-D-glucose 1-phosphate. Its activity is regulated as follows. Activity of phosphorylase is controlled both by allosteric means (through the non-covalent binding of metabolites) and by covalent modification. Thus AMP allosterically activates, whereas ATP, ADP, and glucose-6-phosphate allosterically inhibit, phosphorylase B. Functionally, glycogen phosphorylase that regulates glycogen mobilization. Phosphorylase is an important allosteric enzyme in carbohydrate metabolism. Enzymes from different sources differ in their regulatory mechanisms and in their natural substrates. However, all known phosphorylases share catalytic and structural properties. In Rattus norvegicus (Rat), this protein is Glycogen phosphorylase, brain form (Pygb).